Consider the following 211-residue polypeptide: Proteasome subunit beta (211 aa).

A propeptide spans 1–8 (MNQTLETG) (removed in mature form; by autocatalysis). Thr-9 functions as the Nucleophile in the catalytic mechanism.

The protein belongs to the peptidase T1B family. As to quaternary structure, the 20S proteasome core is composed of 14 alpha and 14 beta subunits that assemble into four stacked heptameric rings, resulting in a barrel-shaped structure. The two inner rings, each composed of seven catalytic beta subunits, are sandwiched by two outer rings, each composed of seven alpha subunits. The catalytic chamber with the active sites is on the inside of the barrel. Has a gated structure, the ends of the cylinder being occluded by the N-termini of the alpha-subunits. Is capped at one or both ends by the proteasome regulatory ATPase, PAN.

It is found in the cytoplasm. It catalyses the reaction Cleavage of peptide bonds with very broad specificity.. Its activity is regulated as follows. The formation of the proteasomal ATPase PAN-20S proteasome complex, via the docking of the C-termini of PAN into the intersubunit pockets in the alpha-rings, triggers opening of the gate for substrate entry. Interconversion between the open-gate and close-gate conformations leads to a dynamic regulation of the 20S proteasome proteolysis activity. Functionally, component of the proteasome core, a large protease complex with broad specificity involved in protein degradation. The T.acidophilum proteasome is able to cleave oligopeptides after Tyr, Leu, Phe, and to a lesser extent after Glu and Arg. Thus, displays chymotrypsin-like activity and low level of caspase-like and trypsin-like activities. The protein is Proteasome subunit beta of Thermoplasma acidophilum (strain ATCC 25905 / DSM 1728 / JCM 9062 / NBRC 15155 / AMRC-C165).